The sequence spans 280 residues: Equatorin (280 aa).

Residues 1–19 form the signal peptide; sequence MDFILLIFLSGVFLPNIFS. Residues 20–183 are Vesicular-facing; that stretch reads LQPTVEQDPG…LSELEEIKLK (164 aa). The tract at residues 112–131 is disordered; sequence ATASGEEDKRSEPSRKSSTP. Basic and acidic residues predominate over residues 117-126; the sequence is EEDKRSEPSR. A glycan (N-linked (GlcNAc...) asparagine) is linked at Asn-145. The chain crosses the membrane as a helical span at residues 184–204; sequence LMLGISLMTLILLIPLLIFCF. At 205–280 the chain is on the cytoplasmic side; sequence ATLYKLRHLR…AEVTEERISE (76 aa). Ser-279 bears the Phosphoserine mark.

As to quaternary structure, interacts with SNAP25. In terms of processing, highly N- and O-glycosylated; contains sialic acid. Highly expressed in testis and epididymis. Low expression in other tissues.

It is found in the cytoplasmic vesicle. The protein localises to the secretory vesicle. Its subcellular location is the acrosome membrane. It localises to the acrosome inner membrane. The protein resides in the acrosome outer membrane. In terms of biological role, acrosomal membrane-anchored protein involved in the process of fertilization and in acrosome biogenesis. This Rattus norvegicus (Rat) protein is Equatorin (Eqtn).